A 529-amino-acid chain; its full sequence is Beta-hexosaminidase subunit alpha (529 aa).

An N-terminal signal peptide occupies residues 1-22; it reads MAGSTLRFSLLLAAAFAGRATA. Positions 23–88 are excised as a propeptide; the sequence is LWPWPQYIQT…RFPHPIEKRH (66 aa). An intrachain disulfide couples C58 to C104. N115, N157, and N295 each carry an N-linked (GlcNAc...) asparagine glycan. A disulfide bridge connects residues C277 and C328. E323 (proton donor) is an active-site residue. The interval 423 to 424 is critical for hydrolysis GM2 gangliosides; it reads NH. C505 and C522 are joined by a disulfide.

The protein belongs to the glycosyl hydrolase 20 family. As to quaternary structure, there are 3 beta-hexosaminidase isozymes: isozyme A (hexosaminidase A) is a heterodimer composed of one subunit alpha and one subunit beta (chain A and B); isozyme B (hexosaminidase B) is a homodimer of two beta subunits (two chains A and B); isozyme S (hexosaminidase S) is a homodimer of two alpha subunits. The composition of the dimer (isozyme A versus isozyme S) has a significant effect on the substrate specificity of the alpha subunit active site.

Its subcellular location is the lysosome. It carries out the reaction Hydrolysis of terminal non-reducing N-acetyl-D-hexosamine residues in N-acetyl-beta-D-hexosaminides.. It catalyses the reaction N-acetyl-beta-D-galactosaminyl-(1-&gt;4)-beta-D-3-sulfogalactosyl-(1-&gt;4)-beta-D-glucosyl-(1&lt;-&gt;1')-ceramide + H2O = a beta-D-3-sulfogalactosyl-(1-&gt;4)-beta-D-glucosyl-(1&lt;-&gt;1')-ceramide + N-acetyl-beta-D-galactosamine. The catalysed reaction is a ganglioside GM2 (d18:1(4E)) + H2O = a ganglioside GM3 (d18:1(4E)) + N-acetyl-beta-D-galactosamine. The enzyme catalyses a ganglioside GM2 + H2O = a ganglioside GM3 + N-acetyl-beta-D-galactosamine. It carries out the reaction beta-D-GalNAc-(1-&gt;4)-alpha-L-IdoA-(1-&gt;3)-beta-D-GalNAc-4-sulfate-(1-&gt;4)-alpha-L-IdoA-(1-&gt;3)-D-GalNAc-4-sulfate + H2O = alpha-L-IdoA-(1-&gt;3)-beta-D-GalNAc-4-sulfate-(1-&gt;4)-alpha-L-IdoA-(1-&gt;3)-D-GalNAc-4-sulfate + N-acetyl-D-galactosamine. It catalyses the reaction N-acetyl-beta-D-6-sulfogalactosaminyl-(1-&gt;4)-alpha-L-iduronyl-(1-&gt;3)-N-acetyl-D-6-sulfogalactosamine + H2O = alpha-L-iduronyl-(1-&gt;3)-N-acetyl-D-6-sulfogalactosamine + N-acetyl-D-6-sulfogalactosamine. With respect to regulation, addition of GM2A stimulates the hydrolysis of sulfated glycosphingolipid SM2 and the ganglioside GM2. Its function is as follows. Hydrolyzes the non-reducing end N-acetyl-D-hexosamine and/or sulfated N-acetyl-D-hexosamine of glycoconjugates, such as the oligosaccharide moieties from proteins and neutral glycolipids, or from certain mucopolysaccharides. The isozyme S is as active as the isozyme A on the anionic bis-sulfated glycans, the chondroitin-6-sulfate trisaccharide (C6S-3), and the dermatan sulfate pentasaccharide, and the sulfated glycosphingolipid SM2. The isozyme B does not hydrolyze each of these substrates, however hydrolyzes efficiently neutral oligosaccharide. Only the isozyme A is responsible for the degradation of GM2 gangliosides in the presence of GM2A. This Bos taurus (Bovine) protein is Beta-hexosaminidase subunit alpha.